Here is a 744-residue protein sequence, read N- to C-terminus: Translation initiation factor IF-2, chloroplastic (744 aa).

The segment at 113 to 146 (NSEGSFKSGKQKKKEKGKHKQNVNKDIHHTKNNR) is disordered. Over residues 121 to 134 (GKQKKKEKGKHKQN) the composition is skewed to basic residues. Residues 244-417 (NRAPIVTILG…CSLAEFINLK (174 aa)) form the tr-type G domain. Positions 253-260 (GHVDHGKT) are G1. 253–260 (GHVDHGKT) provides a ligand contact to GTP. Positions 278–282 (GITQS) are G2. The G3 stretch occupies residues 303 to 306 (DTPG). GTP-binding positions include 303-307 (DTPGH) and 357-360 (NKID). The G4 stretch occupies residues 357-360 (NKID). The G5 stretch occupies residues 393 to 395 (SAL).

The protein belongs to the TRAFAC class translation factor GTPase superfamily. Classic translation factor GTPase family. IF-2 subfamily.

Its subcellular location is the plastid. It is found in the chloroplast. One of the essential components for the initiation of protein synthesis. Protects formylmethionyl-tRNA from spontaneous hydrolysis and promotes its binding to the 30S ribosomal subunits. Also involved in the hydrolysis of GTP during the formation of the 70S ribosomal complex. In Gracilaria tenuistipitata var. liui (Red alga), this protein is Translation initiation factor IF-2, chloroplastic (infB).